Here is a 142-residue protein sequence, read N- to C-terminus: Putative pre-16S rRNA nuclease (142 aa).

This sequence belongs to the YqgF nuclease family.

The protein resides in the cytoplasm. Its function is as follows. Could be a nuclease involved in processing of the 5'-end of pre-16S rRNA. The chain is Putative pre-16S rRNA nuclease from Prosthecochloris aestuarii (strain DSM 271 / SK 413).